We begin with the raw amino-acid sequence, 289 residues long: Bis(5'-nucleosyl)-tetraphosphatase, symmetrical (289 aa).

It belongs to the Ap4A hydrolase family.

It carries out the reaction P(1),P(4)-bis(5'-adenosyl) tetraphosphate + H2O = 2 ADP + 2 H(+). Hydrolyzes diadenosine 5',5'''-P1,P4-tetraphosphate to yield ADP. The chain is Bis(5'-nucleosyl)-tetraphosphatase, symmetrical from Yersinia pseudotuberculosis serotype IB (strain PB1/+).